The following is a 408-amino-acid chain: Arginine biosynthesis bifunctional protein ArgJ (408 aa).

Residues Thr156, Lys182, Thr193, Glu279, Asn403, and Thr408 each contribute to the substrate site. The active-site Nucleophile is Thr193.

The protein belongs to the ArgJ family. In terms of assembly, heterotetramer of two alpha and two beta chains.

The protein resides in the cytoplasm. It carries out the reaction N(2)-acetyl-L-ornithine + L-glutamate = N-acetyl-L-glutamate + L-ornithine. The enzyme catalyses L-glutamate + acetyl-CoA = N-acetyl-L-glutamate + CoA + H(+). It participates in amino-acid biosynthesis; L-arginine biosynthesis; L-ornithine and N-acetyl-L-glutamate from L-glutamate and N(2)-acetyl-L-ornithine (cyclic): step 1/1. Its pathway is amino-acid biosynthesis; L-arginine biosynthesis; N(2)-acetyl-L-ornithine from L-glutamate: step 1/4. In terms of biological role, catalyzes two activities which are involved in the cyclic version of arginine biosynthesis: the synthesis of N-acetylglutamate from glutamate and acetyl-CoA as the acetyl donor, and of ornithine by transacetylation between N(2)-acetylornithine and glutamate. The chain is Arginine biosynthesis bifunctional protein ArgJ from Methylococcus capsulatus (strain ATCC 33009 / NCIMB 11132 / Bath).